Here is a 772-residue protein sequence, read N- to C-terminus: Semaphorin-3A (772 aa).

The first 20 residues, 1–20 (MGWFTGIACLFWGILLTARA), serve as a signal peptide directing secretion. Residues 31–514 (RLKLSYKEML…STAGVAQLPL (484 aa)) form the Sema domain. N-linked (GlcNAc...) asparagine glycosylation is present at asparagine 53. Cysteine 103 and cysteine 114 are joined by a disulfide. Asparagine 125 carries an N-linked (GlcNAc...) asparagine glycan. 4 disulfides stabilise this stretch: cysteine 132–cysteine 141, cysteine 269–cysteine 381, cysteine 293–cysteine 341, and cysteine 517–cysteine 535. The Ig-like C2-type domain maps to 577 to 665 (HGHSLEERII…GFMQTLLKVT (89 aa)). Asparagine 591 carries an N-linked (GlcNAc...) asparagine glycan. Residues cysteine 650 and cysteine 723 are joined by a disulfide bond. Positions 677-691 (LLHKDDDGDGSKTKE) are enriched in basic and acidic residues. Disordered stretches follow at residues 677-698 (LLHKDDDGDGSKTKEMSSSMTP) and 729-772 (RDRK…PRSV). The span at 729 to 738 (RDRKQRRQRP) shows a compositional bias: basic residues. The span at 750 to 772 (HMQESKKGRNRRTHEFERAPRSV) shows a compositional bias: basic and acidic residues.

It belongs to the semaphorin family. In terms of assembly, interacts with PLXND1. As to expression, expressed in the dorsal root ganglia.

It is found in the secreted. May be involved in guiding growing axons towards their targets by forming a molecular boundary that instructs axons to engage in the formation of specific nerve tracts. Binds to neuropilin. Involved in the development of the olfactory system and in neuronal control of puberty. The polypeptide is Semaphorin-3A (Sema3a) (Rattus norvegicus (Rat)).